A 388-amino-acid polypeptide reads, in one-letter code: MKHLHRFFSSDASGGIILIIAAILAMIMANSGATSGWYHDFLETPVQLRVGSLEINKNMLLWINDALMAVFFLLVGLEVKRELMQGSLASLRQAAFPVIAAIGGMIVPALLYLAFNYADPITREGWAIPAATDIAFALGVLALLGSRVPLVLKIFLMALAIIDDLGAIIIIALFYTNDLSMASLGVAAVAIAVLAVLNLCGVRRTGVYILVGVVLWTAVLKSGVHATLAGVIVGFFIPLKEKHGRSPAKRLEHVLHPWVAYLILPLFAFANAGVSLQGVTLDGLTSILPLGIIAGLLIGKPLGISLFCWLALRLKLAHLPEGTTYQQIMVVGILCGIGFTMSIFIASLAFGSVDPELINWAKLGILVGSISSAVIGYSWLRVRLRPSV.

Residues 1 to 11 (MKHLHRFFSSD) lie on the Cytoplasmic side of the membrane. The helical transmembrane segment at 12–31 (ASGGIILIIAAILAMIMANS) threads the bilayer. Residues 32–58 (GATSGWYHDFLETPVQLRVGSLEINKN) lie on the Periplasmic side of the membrane. The helical transmembrane segment at 59–80 (MLLWINDALMAVFFLLVGLEVK) threads the bilayer. Topologically, residues 81 to 96 (RELMQGSLASLRQAAF) are cytoplasmic. Residues 97-116 (PVIAAIGGMIVPALLYLAFN) traverse the membrane as a helical segment. Residues 117–122 (YADPIT) are Periplasmic-facing. A helical transmembrane segment spans residues 123 to 130 (REGWAIPA). Over 131–154 (ATDIAFALGVLALLGSRVPLVLKI) the chain is Cytoplasmic. The chain crosses the membrane as a helical span at residues 155 to 176 (FLMALAIIDDLGAIIIIALFYT). Topologically, residues 177-180 (NDLS) are periplasmic. The chain crosses the membrane as a helical span at residues 181 to 200 (MASLGVAAVAIAVLAVLNLC). The Cytoplasmic portion of the chain corresponds to 201–204 (GVRR). The chain crosses the membrane as a helical span at residues 205-222 (TGVYILVGVVLWTAVLKS). Glycine 223 is a topological domain (periplasmic). The chain crosses the membrane as a helical span at residues 224–236 (VHATLAGVIVGFF). Residues 237–253 (IPLKEKHGRSPAKRLEH) lie on the Cytoplasmic side of the membrane. A helical membrane pass occupies residues 254–272 (VLHPWVAYLILPLFAFANA). Over 273 to 286 (GVSLQGVTLDGLTS) the chain is Periplasmic. The chain crosses the membrane as a helical span at residues 287–310 (ILPLGIIAGLLIGKPLGISLFCWL). Residues 311-339 (ALRLKLAHLPEGTTYQQIMVVGILCGIGF) lie on the Cytoplasmic side of the membrane. The chain crosses the membrane as a helical span at residues 340–350 (TMSIFIASLAF). Topologically, residues 351–357 (GSVDPEL) are periplasmic. A helical membrane pass occupies residues 358–380 (INWAKLGILVGSISSAVIGYSWL). Residues 381 to 388 (RVRLRPSV) are Cytoplasmic-facing.

It belongs to the NhaA Na(+)/H(+) (TC 2.A.33) antiporter family.

It is found in the cell inner membrane. The catalysed reaction is Na(+)(in) + 2 H(+)(out) = Na(+)(out) + 2 H(+)(in). Na(+)/H(+) antiporter that extrudes sodium in exchange for external protons. This chain is Na(+)/H(+) antiporter NhaA, found in Shigella flexneri.